The following is a 231-amino-acid chain: Regulatory protein VanRc (231 aa).

Positions 4–117 constitute a Response regulatory domain; that stretch reads KIVVVDDEKE…EVVARVKTQL (114 aa). Asp-53 carries the 4-aspartylphosphate modification. A DNA-binding region (ompR/PhoB-type) is located at residues 132-231; it reads VEEYEKDGLI…VWGVGYIIEK (100 aa).

Phosphorylated by VanSc.

The protein localises to the cytoplasm. In terms of biological role, member of the two-component regulatory system VanSc/VanRc. Binds to the promoter regions of target genes. Activates the transcription of vanC1 and vanXYC in response to vancomycin which results in vancomycin resistance. This is Regulatory protein VanRc from Enterococcus gallinarum.